The primary structure comprises 169 residues: MYTSGYANRSSSFPTTTHNAARTATENAAAGLVSEVVYHEDQPMMAQLLLLPLLRQLGQQSRWQLWLTPQQKLSREWVQSSGLPLTKVMQISQLAPRHTLESMIRALRTGNYSVVIGWMTEELTEEEHASLVEAAKVGNAVGFIMRPVRAHALPRRQHSGLKIHSNLYH.

The segment at 106 to 112 (ALRTGNY) is ftsZ binding. Residues 162–169 (KIHSNLYH) form a lon protease binding region.

It belongs to the SulA family. As to quaternary structure, interacts with FtsZ. Post-translationally, is rapidly cleaved and degraded by the Lon protease once DNA damage is repaired.

Its function is as follows. Component of the SOS system and an inhibitor of cell division. Accumulation of SulA causes rapid cessation of cell division and the appearance of long, non-septate filaments. In the presence of GTP, binds a polymerization-competent form of FtsZ in a 1:1 ratio, thus inhibiting FtsZ polymerization and therefore preventing it from participating in the assembly of the Z ring. This mechanism prevents the premature segregation of damaged DNA to daughter cells during cell division. The polypeptide is Cell division inhibitor SulA (Salmonella agona (strain SL483)).